The following is a 932-amino-acid chain: GPI ethanolamine phosphate transferase 1 (932 aa).

At Met-1–Leu-8 the chain is on the cytoplasmic side. The chain crosses the membrane as a helical span at residues Val-9 to Phe-29. Over Val-30–Leu-456 the chain is Lumenal. 3 N-linked (GlcNAc...) asparagine glycosylation sites follow: Asn-138, Asn-202, and Asn-360. The helical transmembrane segment at Val-457–Val-477 threads the bilayer. Topologically, residues Val-478–Thr-486 are cytoplasmic. Residues Ser-487–Phe-507 traverse the membrane as a helical segment. Residues Gln-508–Lys-509 are Lumenal-facing. A helical transmembrane segment spans residues Ser-510 to Gln-530. Residues Arg-531–Pro-551 lie on the Cytoplasmic side of the membrane. A helical transmembrane segment spans residues Ala-552–Gly-572. Over Tyr-573–Glu-577 the chain is Lumenal. The helical transmembrane segment at Ile-578–Ala-598 threads the bilayer. Residues Lys-599 to Pro-603 lie on the Cytoplasmic side of the membrane. Residues Thr-604–Val-624 traverse the membrane as a helical segment. Topologically, residues Lys-625–Glu-627 are lumenal. Residues Ser-628 to Ile-648 form a helical membrane-spanning segment. Residues His-649–Lys-653 are Cytoplasmic-facing. A helical membrane pass occupies residues Leu-654–Thr-674. The Lumenal portion of the chain corresponds to Met-675 to Gln-696. A helical membrane pass occupies residues Val-697–Ser-717. Over Asp-718–Phe-737 the chain is Cytoplasmic. Residues Val-738 to Ile-758 traverse the membrane as a helical segment. Over Trp-759 to Met-786 the chain is Lumenal. Residues Ala-787–Ile-807 form a helical membrane-spanning segment. At Ser-808–Gly-828 the chain is on the cytoplasmic side. Residues Ala-829–Leu-849 form a helical membrane-spanning segment. Topologically, residues Asn-850 to Ala-859 are lumenal. Residues Leu-860–Val-880 traverse the membrane as a helical segment. Over Asp-881 to Gly-900 the chain is Cytoplasmic. The chain crosses the membrane as a helical span at residues Leu-901–Ile-921. At Ala-922–Met-932 the chain is on the lumenal side.

It belongs to the PIGG/PIGN/PIGO family. PIGN subfamily.

The protein resides in the endoplasmic reticulum membrane. Its pathway is glycolipid biosynthesis; glycosylphosphatidylinositol-anchor biosynthesis. Its function is as follows. Ethanolamine phosphate transferase involved in glycosylphosphatidylinositol-anchor biosynthesis. Transfers ethanolamine phosphate to the first alpha-1,4-linked mannose of the glycosylphosphatidylinositol precursor of GPI-anchor. This Yarrowia lipolytica (strain CLIB 122 / E 150) (Yeast) protein is GPI ethanolamine phosphate transferase 1 (MCD4).